A 280-amino-acid polypeptide reads, in one-letter code: UDP-3-O-acyl-N-acetylglucosamine deacetylase (280 aa).

Zn(2+) is bound by residues H77, H238, and D242. H265 acts as the Proton donor in catalysis.

Belongs to the LpxC family. The cofactor is Zn(2+).

The enzyme catalyses a UDP-3-O-[(3R)-3-hydroxyacyl]-N-acetyl-alpha-D-glucosamine + H2O = a UDP-3-O-[(3R)-3-hydroxyacyl]-alpha-D-glucosamine + acetate. Its pathway is glycolipid biosynthesis; lipid IV(A) biosynthesis; lipid IV(A) from (3R)-3-hydroxytetradecanoyl-[acyl-carrier-protein] and UDP-N-acetyl-alpha-D-glucosamine: step 2/6. Its function is as follows. Catalyzes the hydrolysis of UDP-3-O-myristoyl-N-acetylglucosamine to form UDP-3-O-myristoylglucosamine and acetate, the committed step in lipid A biosynthesis. This Trichormus variabilis (strain ATCC 29413 / PCC 7937) (Anabaena variabilis) protein is UDP-3-O-acyl-N-acetylglucosamine deacetylase.